The chain runs to 198 residues: Recombination protein RecR (198 aa).

A C4-type zinc finger spans residues 56–71 (CHVCGNVDTGDPCGIC). The region spanning 79 to 174 (RMLCVVEEVA…RLTQLAHGLP (96 aa)) is the Toprim domain.

It belongs to the RecR family.

May play a role in DNA repair. It seems to be involved in an RecBC-independent recombinational process of DNA repair. It may act with RecF and RecO. This chain is Recombination protein RecR, found in Rhizorhabdus wittichii (strain DSM 6014 / CCUG 31198 / JCM 15750 / NBRC 105917 / EY 4224 / RW1) (Sphingomonas wittichii).